The primary structure comprises 132 residues: Small ribosomal subunit protein uS8 (132 aa).

It belongs to the universal ribosomal protein uS8 family. As to quaternary structure, part of the 30S ribosomal subunit. Contacts proteins S5 and S12.

Its function is as follows. One of the primary rRNA binding proteins, it binds directly to 16S rRNA central domain where it helps coordinate assembly of the platform of the 30S subunit. The chain is Small ribosomal subunit protein uS8 from Streptococcus thermophilus (strain CNRZ 1066).